The following is a 1748-amino-acid chain: Tight junction protein 1 (1748 aa).

Residues threonine 23 to lysine 110 enclose the PDZ 1 domain. The segment covering alanine 102–valine 112 has biased composition (basic residues). Positions alanine 102 to leucine 189 are disordered. Residues proline 123–isoleucine 136 are compositionally biased toward acidic residues. At serine 125 the chain carries Phosphoserine. Tyrosine 132 bears the Phosphotyrosine mark. Residues arginine 149–serine 175 show a composition bias toward basic and acidic residues. Phosphoserine occurs at positions 175, 178, and 179. Position 185 is a phosphothreonine (threonine 185). Positions lysine 186–glutamate 264 constitute a PDZ 2 domain. 2 positions are modified to phosphoserine: serine 212 and serine 241. Phosphothreonine is present on threonine 267. 13 positions are modified to phosphoserine: serine 275, serine 277, serine 280, serine 284, serine 290, serine 294, serine 297, serine 300, serine 323, serine 329, serine 334, serine 337, and serine 353. The interval leucine 295 to aspartate 396 is disordered. A compositionally biased stretch (basic and acidic residues) spans histidine 299–arginine 327. Positions serine 329–leucine 338 are enriched in polar residues. Residue threonine 354 is modified to Phosphothreonine. Positions lysine 357 to lysine 377 are enriched in basic and acidic residues. In terms of domain architecture, PDZ 3 spans serine 421–lysine 502. The 69-residue stretch at glycine 516–alanine 584 folds into the SH3 domain. The region spanning arginine 598–asparagine 779 is the Guanylate kinase-like domain. Phosphoserine is present on residues serine 617 and serine 622. An occludin (OCLN)-binding region region spans residues tyrosine 633 to arginine 876. Threonine 809 bears the Phosphothreonine mark. Phosphoserine is present on residues serine 810 and serine 821. Position 822 is a phosphotyrosine (tyrosine 822). Phosphoserine is present on residues serine 824, serine 828, and serine 837. Disordered regions lie at residues alanine 825–glutamate 1081 and aspartate 1095–aspartate 1587. Residues threonine 846, threonine 848, threonine 854, threonine 861, and threonine 868 each carry the phosphothreonine modification. Residues glutamate 879–asparagine 892 are compositionally biased toward basic and acidic residues. Low complexity predominate over residues glutamine 893 to proline 906. Serine 912 carries the post-translational modification Phosphoserine. Composition is skewed to polar residues over residues proline 934–asparagine 953 and proline 963–threonine 979. Serine 968 carries the post-translational modification Phosphoserine. The segment covering aspartate 998 to arginine 1014 has biased composition (basic and acidic residues). The span at tyrosine 1061–arginine 1072 shows a compositional bias: polar residues. Serine 1071, serine 1111, and serine 1139 each carry phosphoserine. Residues histidine 1110 to glutamate 1125 show a composition bias toward basic and acidic residues. Phosphotyrosine is present on residues tyrosine 1140 and tyrosine 1165. The interval arginine 1151 to proline 1371 is actin-binding region (ABR). Composition is skewed to basic and acidic residues over residues lysine 1269–asparagine 1286 and proline 1336–aspartate 1347. The residue at position 1354 (tyrosine 1354) is a Phosphotyrosine. The residue at position 1366 (serine 1366) is a Phosphoserine. The segment covering serine 1389 to serine 1400 has biased composition (low complexity). The span at lysine 1403–glutamate 1420 shows a compositional bias: basic and acidic residues. A Phosphoserine modification is found at serine 1413. 2 stretches are compositionally biased toward polar residues: residues asparagine 1459–valine 1470 and glycine 1512–proline 1522. The span at proline 1538–lysine 1547 shows a compositional bias: basic and acidic residues. Phosphoserine is present on residues serine 1545 and serine 1617. In terms of domain architecture, ZU5 spans alanine 1634–phenylalanine 1748.

The protein belongs to the MAGUK family. Homodimer. Forms heterodimers TJP3. Forms a heterodimer (via PDZ2 domain) with TJP2/ZO2 (via PDZ2 domain). Interacts with OCLN, CALM, claudins, CGN/cingulin, CXADR, GJA12, GJD3 and UBN1. Interacts (via ZU5 domain) with CDC42BPB and MYZAP. Interacts (via PDZ domain) with GJA1. Interacts (via PDZ domains) with ANKRD2. Interacts with POPDC1 (via the C-terminus cytoplasmic tail). Interacts with HSPA4 and KIRREL1. Interacts with DLL1. Interacts with USP53 (via the C-terminal region). Interacts (via ABR region) with F-actin. Interacts with DNMBP (via C-terminal domain); required for the apical cell-cell junction localization of DNMBP. Interacts with SPEF1. Interacts (via N-terminus) with CTNNA1. Interacts with CLDN18. Interacts with CLDN16 (via TRV motif); this is a prerequisite for anchoring of CLDN16 at the tight junction. Interacts with PKP1; the interaction facilitates TJP1/ZO-1 localization to the plasma membrane. Interacts with PATJ (via PDZ1-6 domains); the interaction is required for attachment and extension of TJP1/ZO1 condensates along the apical cell interface. Post-translationally, phosphorylated at tyrosine redidues in response to epidermal growth factor (EGF). This response is dependent on an intact actin microfilament system. Dephosphorylated by PTPRJ. In terms of tissue distribution, the alpha-containing isoform is found in most epithelial cell junctions. The short isoform is found both in endothelial cells and the highly specialized epithelial junctions of renal glomeruli and Sertoli cells of the seminiferous tubules.

The protein localises to the cell membrane. It is found in the cell junction. The protein resides in the tight junction. It localises to the gap junction. Its subcellular location is the cell projection. The protein localises to the podosome. Functionally, TJP1, TJP2, and TJP3 are closely related scaffolding proteins that link tight junction (TJ) transmembrane proteins such as claudins, junctional adhesion molecules, and occludin to the actin cytoskeleton. Forms a multistranded TJP1/ZO1 condensate which elongates to form a tight junction belt, the belt is anchored at the apical cell membrane via interaction with PATJ. The tight junction acts to limit movement of substances through the paracellular space and as a boundary between the compositionally distinct apical and basolateral plasma membrane domains of epithelial and endothelial cells. Necessary for lumenogenesis, and particularly efficient epithelial polarization and barrier formation. Plays a role in the regulation of cell migration by targeting CDC42BPB to the leading edge of migrating cells. Plays an important role in podosome formation and associated function, thus regulating cell adhesion and matrix remodeling. With TJP2 and TJP3, participates in the junctional retention and stability of the transcription factor DBPA, but is not involved in its shuttling to the nucleus. May play a role in mediating cell morphology changes during ameloblast differentiation via its role in tight junctions. This is Tight junction protein 1 from Homo sapiens (Human).